The primary structure comprises 350 residues: Methylthioribose-1-phosphate isomerase (350 aa).

Substrate-binding positions include 47–49, Arg89, and Gln196; that span reads RGA. The active-site Proton donor is the Asp237. 247-248 contacts substrate; the sequence is NK.

It belongs to the eIF-2B alpha/beta/delta subunits family. MtnA subfamily.

The catalysed reaction is 5-(methylsulfanyl)-alpha-D-ribose 1-phosphate = 5-(methylsulfanyl)-D-ribulose 1-phosphate. The protein operates within amino-acid biosynthesis; L-methionine biosynthesis via salvage pathway; L-methionine from S-methyl-5-thio-alpha-D-ribose 1-phosphate: step 1/6. Functionally, catalyzes the interconversion of methylthioribose-1-phosphate (MTR-1-P) into methylthioribulose-1-phosphate (MTRu-1-P). This chain is Methylthioribose-1-phosphate isomerase, found in Nitratidesulfovibrio vulgaris (strain DSM 19637 / Miyazaki F) (Desulfovibrio vulgaris).